Here is a 186-residue protein sequence, read N- to C-terminus: Intraflagellar transport protein 27 homolog (186 aa).

GTP-binding positions include 12-19 (GDPAVGKT), 64-68 (DSAGK), and 123-126 (TKTD).

It belongs to the small GTPase superfamily. Rab family. In terms of assembly, component of the IFT complex B, at least composed of IFT20, IFT22, IFT25, IFT27, IFT46, IFT52, TRAF3IP1/IFT54, IFT57, IFT74, IFT80, IFT81, and IFT88. Interacts with IFT25. Interacts with IFT70B. Interacts with RABL2/RABL2A; binding is equal in the presence of GTP or GDP. Interacts with IFT88. Interacts with ARL6; recognizes and binds with the GTP-free form of ARL6. In terms of tissue distribution, expressed predominantly in the testis (at protein level). Co-localizes with RABL2/RABL2A in the midpiece of elongated spermatids within the testis (at protein level).

It is found in the cell projection. The protein localises to the cilium. Its subcellular location is the cytoplasm. The protein resides in the flagellum. In terms of biological role, small GTPase-like component of the intraflagellar transport (IFT) complex B that promotes the exit of the BBSome complex from cilia via its interaction with ARL6. Not involved in entry of the BBSome complex into cilium. Prevents aggregation of GTP-free ARL6. Required for hedgehog signaling. Forms a subcomplex within the IFT complex B with IFT25. Its role in intraflagellar transport is mainly seen in tissues rich in ciliated cells such as kidney and testis. Essential for male fertility, spermiogenesis and sperm flagella formation. Plays a role in the early development of the kidney. May be involved in the regulation of ureteric bud initiation. The protein is Intraflagellar transport protein 27 homolog (Ift27) of Mus musculus (Mouse).